A 280-amino-acid chain; its full sequence is Vitamin B12-binding protein (280 aa).

The signal sequence occupies residues Met-1–Ala-27. A Fe/B12 periplasmic-binding domain is found at Arg-30–Ala-277. Tyr-57 is a cyanocob(III)alamin binding site. Residues Cys-190 and Cys-266 are joined by a disulfide bond.

Belongs to the BtuF family. As to quaternary structure, the complex is composed of two ATP-binding proteins (BtuD), two transmembrane proteins (BtuC) and a solute-binding protein (BtuF).

The protein localises to the periplasm. Functionally, part of the ABC transporter complex BtuCDF involved in vitamin B12 import. Binds vitamin B12 and delivers it to the periplasmic surface of BtuC. This Yersinia pseudotuberculosis serotype O:1b (strain IP 31758) protein is Vitamin B12-binding protein.